Here is a 216-residue protein sequence, read N- to C-terminus: Octanoyltransferase (216 aa).

The 176-residue stretch at 32-207 (SDSQDELWIV…TFSQIMGYQQ (176 aa)) folds into the BPL/LPL catalytic domain. Substrate is bound by residues 71-78 (RGGQVTYH), 138-140 (SLG), and 151-153 (GLA). Catalysis depends on C169, which acts as the Acyl-thioester intermediate.

This sequence belongs to the LipB family.

The protein resides in the cytoplasm. It catalyses the reaction octanoyl-[ACP] + L-lysyl-[protein] = N(6)-octanoyl-L-lysyl-[protein] + holo-[ACP] + H(+). The protein operates within protein modification; protein lipoylation via endogenous pathway; protein N(6)-(lipoyl)lysine from octanoyl-[acyl-carrier-protein]: step 1/2. Functionally, catalyzes the transfer of endogenously produced octanoic acid from octanoyl-acyl-carrier-protein onto the lipoyl domains of lipoate-dependent enzymes. Lipoyl-ACP can also act as a substrate although octanoyl-ACP is likely to be the physiological substrate. In Shewanella frigidimarina (strain NCIMB 400), this protein is Octanoyltransferase.